Here is a 141-residue protein sequence, read N- to C-terminus: Putative pre-16S rRNA nuclease (141 aa).

The protein belongs to the YqgF nuclease family.

The protein localises to the cytoplasm. Could be a nuclease involved in processing of the 5'-end of pre-16S rRNA. The protein is Putative pre-16S rRNA nuclease of Desulforudis audaxviator (strain MP104C).